The following is a 245-amino-acid chain: MEKTELIQKAKLAEQAERYDDMATCMKAVTEQGAELSNEERNLLSVAYKNVVGGRRSAWRVISSIEQKTDTSDKKLQLIKDYREKVESELRSICTTVLELLDKYLIANATNPESKVFYLKMKGDYFRYLAEVACGDDRKQTIENSQGAYQEAFDISKKEMQPTHPIRLGLALNFSVFYYEILNNPELACTLAKTAFDEAIAELDTLNEDSYKDSTLIMQLLRDNLTLWTSDSAGEECDAAEGAEN.

N-acetylmethionine is present on Met-1. Residue Lys-3 is modified to N6-acetyllysine. At Lys-49 the chain carries N6-acetyllysine; alternate. Residue Lys-49 forms a Glycyl lysine isopeptide (Lys-Gly) (interchain with G-Cter in SUMO2); alternate linkage. Lys-68 is modified (N6-acetyllysine). Position 82 is a 3'-nitrotyrosine (Tyr-82). Ser-92 carries the post-translational modification Phosphoserine. Residue Tyr-104 is modified to 3'-nitrotyrosine. Lys-115 is subject to N6-acetyllysine. At Ser-232 the chain carries Phosphoserine; by CK1.

The protein belongs to the 14-3-3 family. In terms of assembly, homodimer. Interacts with CDKN1B ('Thr-198' phosphorylated form); the interaction translocates CDKN1B to the cytoplasm. Interacts with SSH1. Interacts with GAB2. Interacts with RGS7 (phosphorylated form). Interacts with CDK16. Interacts with the 'Ser-241' phosphorylated form of PDPK1. Interacts with the 'Thr-369' phosphorylated form of DAPK2. Interacts with PI4KB, TBC1D22A and TBC1D22B. Interacts with SLITRK1. Interacts with RIPOR2. Interacts with INAVA; the interaction increases upon PRR (pattern recognition receptor) stimulation and is required for cellular signaling pathway activation and cytokine secretion. Interacts with MARK2, MARK3 and MARK4. Interacts with MEFV.

It is found in the cytoplasm. Its function is as follows. Adapter protein implicated in the regulation of a large spectrum of both general and specialized signaling pathways. Binds to a large number of partners, usually by recognition of a phosphoserine or phosphothreonine motif. Binding generally results in the modulation of the activity of the binding partner. Negatively regulates the kinase activity of PDPK1. This is 14-3-3 protein theta (Ywhaq) from Mus musculus (Mouse).